We begin with the raw amino-acid sequence, 209 residues long: ATP phosphoribosyltransferase (209 aa).

It belongs to the ATP phosphoribosyltransferase family. Short subfamily. Heteromultimer composed of HisG and HisZ subunits.

The protein resides in the cytoplasm. It carries out the reaction 1-(5-phospho-beta-D-ribosyl)-ATP + diphosphate = 5-phospho-alpha-D-ribose 1-diphosphate + ATP. It participates in amino-acid biosynthesis; L-histidine biosynthesis; L-histidine from 5-phospho-alpha-D-ribose 1-diphosphate: step 1/9. Functionally, catalyzes the condensation of ATP and 5-phosphoribose 1-diphosphate to form N'-(5'-phosphoribosyl)-ATP (PR-ATP). Has a crucial role in the pathway because the rate of histidine biosynthesis seems to be controlled primarily by regulation of HisG enzymatic activity. The chain is ATP phosphoribosyltransferase from Caldicellulosiruptor bescii (strain ATCC BAA-1888 / DSM 6725 / KCTC 15123 / Z-1320) (Anaerocellum thermophilum).